Consider the following 180-residue polypeptide: Ribosome maturation factor RimM (180 aa).

The PRC barrel domain occupies 97 to 169 (PGELSWDFFV…IITVDLPEGL (73 aa)).

It belongs to the RimM family. In terms of assembly, binds ribosomal protein uS19.

The protein localises to the cytoplasm. Its function is as follows. An accessory protein needed during the final step in the assembly of 30S ribosomal subunit, possibly for assembly of the head region. Essential for efficient processing of 16S rRNA. May be needed both before and after RbfA during the maturation of 16S rRNA. It has affinity for free ribosomal 30S subunits but not for 70S ribosomes. In Bacteroides fragilis (strain YCH46), this protein is Ribosome maturation factor RimM.